The chain runs to 406 residues: Prenyltransferase phqJ (406 aa).

Residues 1 to 19 are compositionally biased toward polar residues; the sequence is MTVSTESNFPHGASTQKPQ. Residues 1–23 form a disordered region; the sequence is MTVSTESNFPHGASTQKPQSAEP. Position 99 (Glu99) interacts with brevianamide F. Residues Arg113, Lys200, and Tyr202 each coordinate dimethylallyl diphosphate. Residue Tyr204 participates in brevianamide F binding. Lys269, Tyr271, and Tyr340 together coordinate dimethylallyl diphosphate.

It belongs to the tryptophan dimethylallyltransferase family.

It participates in alkaloid biosynthesis. Prenyltransferase; part of the gene cluster that mediates the biosynthesis of paraherquamide, a fungal indole alkaloid that belongs to a family of natural products containing a characteristic bicyclo[2.2.2]diazaoctane core. The first steps in the biosynthesis of paraherquamide is the production of the beta-methyl-proline precursor from L-isoleucine. They require oxidation of a terminally hydroxylated L-isoleucine to the corresponding aldehyde by enzymes which have still to be identified. Spontaneous cyclization and dehydration would yield the 4-methyl pyrolline-5-carboxylic acid, which is then reduced by the pyrroline-5-carboxylate reductase phqD leading to the beta-methyl-proline precursor. The next step of paraherquamide biosynthesis involves coupling of beta-methyl-proline and L-tryptophan by the bimodular NRPS phqB, to produce a monooxopiperazine intermediate. The reductase (R) domain of phqB utilizes NADPH for hydride transfer to reduce the thioester bond of the T domain-tethered linear dipeptide to a hemithioaminal intermediate, which spontaneously cleaves the C-S bond to release the aldehyde product. This compound undergoes spontaneous cyclization and dehydration to give a dienamine which is reverse prenylated at C-2 by the reverse prenyltransferase phqJ. The other prenyltransferase present in the cluster, phqI may be a redundant gene in the pathway. During biosynthetic assembly, the key step to produce the polycyclic core is catalyzed by the bifunctional reductase and intramolecular [4+2] Diels-Alderase, phqE, resulting in formation of the [2.2.2] diazaoctane intermediate preparaherquamide. Following formation of preparaherquamide, an indole 2,3-epoxidation-initiated pinacol-like rearrangement is catalyzed by the phqK FAD-dependent monooxygenase. The prenyltransferase phqA, the cytochrome P450 monooxygenase phqL, and the FAD-linked oxidoreductase phqH (or the cytochrome P450 monooxygenase phqM), are proposed to be involved in the formation of the pyran ring. The FAD-dependent monooxygenase phqK is likely responsible for generation of the spiro-oxindole, and the N-methylation is likely mediated by the phqN methyltransferase leading to the isolable natural product paraherquamide F. However, the order of these biosynthetic steps has still to be determined. In late-stage paraherquamide biosynthesis, the third P450 monooxygenase, phqO, is probably responsible for the C-14 hydroxylation, transforming paraherquamide F to paraherquamide G, and paraherquamide E to the final product paraherquamide A. The expansion from the 6-membered ring pyran (in paraherquamides F and G) to the 7-membered dioxepin ring (in paraherquamides A and E) represents a poorly understood but intriguing process that probably involves the 2-oxoglutarate-dependent dioxygenase phqC. Finally, the remaining members of the paraherquamide cluster, including phqI as well as phqM (or phqH), do not have a clearly prescribed role and appear to be redundant. The polypeptide is Prenyltransferase phqJ (Penicillium fellutanum).